We begin with the raw amino-acid sequence, 743 residues long: Glycerol-3-phosphate O-acyltransferase 2 (743 aa).

Residues 1 to 34 lie on the Lumenal side of the membrane; sequence MSAPAADHNAAKPIPHVPQASRRYKNSYNGFVYN. Residues 35 to 55 traverse the membrane as a helical segment; it reads IHTWLYDVSVFLFNILFTIFF. Residues 56-442 are Cytoplasmic-facing; the sequence is REIKVRGAYN…TKLEALRCFV (387 aa). The chain crosses the membrane as a helical span at residues 443–457; sequence TLIVRLIKFSVFAIL. A topological domain (lumenal) is located at residue Ser-458. A helical transmembrane segment spans residues 459–473; it reads LPGSILFTPIFIICR. The Cytoplasmic portion of the chain corresponds to 474–501; the sequence is VYSEKKAKEGLKKSLVKIKGTDLLATWK. Residues 502–522 form a helical membrane-spanning segment; the sequence is LIVALILAPILYVTYSILLII. The Lumenal segment spans residues 523–531; sequence LARKQHYCR. A helical transmembrane segment spans residues 532–552; it reads IWVPSNNAFIQFVYFYALLVF. The Cytoplasmic portion of the chain corresponds to 553–743; that stretch reads TTYSSLKTGE…RQKREHEKKE (191 aa). Phosphoserine occurs at positions 632, 637, 647, 651, 654, 657, 664, 668, and 671. Phosphothreonine is present on Thr-673. A disordered region spans residues 682–743; that stretch reads KQGQWKSEGE…RQKREHEKKE (62 aa). Phosphoserine is present on Ser-688. Residues 691 to 700 are compositionally biased toward acidic residues; that stretch reads ETSEDEDEFD. Residue Thr-692 is modified to Phosphothreonine. Ser-693 is modified (phosphoserine).

It belongs to the GPAT/DAPAT family. In terms of processing, phosphorylated at a conserved motif involving Ser-664, Ser-668 and Ser-671. This phosphorylation plays a critical role for efficient TAG mobilization. Phosphorylation deficiency at this motif increases the enzyme activity and consequently induces de novo formation of phosphatidic acid.

It localises to the lipid droplet. Its subcellular location is the endoplasmic reticulum membrane. The enzyme catalyses sn-glycerol 3-phosphate + an acyl-CoA = a 1-acyl-sn-glycero-3-phosphate + CoA. It carries out the reaction dihydroxyacetone phosphate + an acyl-CoA = a 1-acylglycerone 3-phosphate + CoA. It catalyses the reaction sn-glycerol 3-phosphate + hexadecanoyl-CoA = 1-hexadecanoyl-sn-glycero-3-phosphate + CoA. The catalysed reaction is (9Z)-hexadecenoyl-CoA + sn-glycerol 3-phosphate = 1-(9Z-hexadecenoyl)-sn-glycero-3-phosphate + CoA. The enzyme catalyses sn-glycerol 3-phosphate + octadecanoyl-CoA = 1-octadecanoyl-sn-glycero-3-phosphate + CoA. It carries out the reaction sn-glycerol 3-phosphate + (9Z)-octadecenoyl-CoA = 1-(9Z-octadecenoyl)-sn-glycero-3-phosphate + CoA. Its pathway is phospholipid metabolism; CDP-diacylglycerol biosynthesis; CDP-diacylglycerol from sn-glycerol 3-phosphate: step 1/3. Its function is as follows. Dual substrate-specific glycerol-3-phosphate/dihydroxyacetone phosphate sn-1 acyltransferase, catalyzing the first and committed reaction in the de novo synthesis of glycerophospholipids and triacylglycerols (TAGs). Can use both Gly-3-P and dihydroxyacetone phosphate with similar efficiencies and has a broad fatty acyl-CoA specificity profile. Transfers a fatty acid from fatty acyl-CoA to the sn-1 position of glycerol-3-phosphate to produce lysophosphatidic acid (LysoPA). These lipids not only are precursors of glycerolipids, but also are dynamic components of signal transduction systems that control cell physiology. This Saccharomyces cerevisiae (strain ATCC 204508 / S288c) (Baker's yeast) protein is Glycerol-3-phosphate O-acyltransferase 2 (GPT2).